The sequence spans 645 residues: Developmental regulatory protein wetA (645 aa).

5 disordered regions span residues 158–187 (SLHS…RKPK), 201–249 (TNLR…VSPP), 284–376 (YYGQ…QMHW), 461–578 (AQTF…DGAS), and 596–618 (GVAP…DRRR). Residues 240 to 249 (TQGNLPVSPP) show a composition bias toward polar residues. Composition is skewed to basic residues over residues 315–326 (QHHHHPHHHHQQ) and 351–361 (QHQHQHHHQQQ). Low complexity predominate over residues 362–373 (QHHQQQQQQQHQ). Residues 509–518 (GPSSSPTPAD) show a composition bias toward polar residues. A compositionally biased stretch (low complexity) spans 528 to 546 (SSGASVSSLRSSSGRLPAS). Residues 562-572 (ISGSNSATSLG) show a composition bias toward polar residues.

Belongs to the wetA family.

Its function is as follows. BrlA, abaA and wetA are pivotal regulators of conidiophore development and conidium maturation. They act individually and together to regulate their own expression and that of numerous other sporulation-specific genes. BrlA, abaA and wetA act together to positively regulate the expression of the Pks1 gene cluster that mediates the biosynthesis of an anthraquinone derivative pigment that contributes to conidial pigmentation that provides protection from UV radiation, heat and cold stress. The chain is Developmental regulatory protein wetA from Metarhizium robertsii (strain ARSEF 23 / ATCC MYA-3075) (Metarhizium anisopliae (strain ARSEF 23)).